Here is a 132-residue protein sequence, read N- to C-terminus: MRHKCLLAMAVVASMAFYSVISTKNVTQVDTVQQENRRLRPRVEPTANELDKQSDVDTKLEADRRLGYPGESGFMLEGELEERGGFPWRTFFLGLFASVIEERGGFPWRTFFLGLFASVIGVSIISACYGIT.

Positions 1–22 (MRHKCLLAMAVVASMAFYSVIS) are cleaved as a signal peptide. The N-linked (GlcNAc...) asparagine glycan is linked to Asn25. Residues 36–57 (NRRLRPRVEPTANELDKQSDVD) are disordered. Residues 37–83 (RRLRPRVEPTANELDKQSDVDTKLEADRRLGYPGESGFMLEGELEER) carry the RxLR-dEER motif. A helical transmembrane segment spans residues 111–131 (FFLGLFASVIGVSIISACYGI).

It belongs to the RxLR effector family. Interacts with host transcription factor NAC069.

It is found in the secreted. It localises to the host endoplasmic reticulum membrane. Secreted effector that inhibits stress-induced relocalization of the transcription factor NAC069 to the nucleus, thus affecting its broad role in abiotic and biotic stress responses. This is Secreted RxLR effector protein BLR08 from Bremia lactucae (Lettuce downy mildew).